Here is a 110-residue protein sequence, read N- to C-terminus: uncharacterized protein (110 aa).

Functionally, may play a regulatory role in sulfomenaquinone (SMK) biosynthesis. This is an uncharacterized protein from Mycobacterium bovis (strain ATCC BAA-935 / AF2122/97).